The following is a 168-amino-acid chain: Putative B3 domain-containing protein Os10g0158600 (168 aa).

A DNA-binding region (TF-B3) is located at residues 4-97; that stretch reads VVFASARLNA…KARVMLLNRQ (94 aa). The tract at residues 105 to 151 is disordered; the sequence is KTPSTTSSDKNRSLSPSDQLTRASTSAHPSTSKSIPPLRNGTGSTKR. A compositionally biased stretch (polar residues) spans 106-138; the sequence is TPSTTSSDKNRSLSPSDQLTRASTSAHPSTSKS.

Its subcellular location is the nucleus. The sequence is that of Putative B3 domain-containing protein Os10g0158600 from Oryza sativa subsp. japonica (Rice).